The sequence spans 330 residues: Aspartate--ammonia ligase (330 aa).

It belongs to the class-II aminoacyl-tRNA synthetase family. AsnA subfamily.

It localises to the cytoplasm. The enzyme catalyses L-aspartate + NH4(+) + ATP = L-asparagine + AMP + diphosphate + H(+). The protein operates within amino-acid biosynthesis; L-asparagine biosynthesis; L-asparagine from L-aspartate (ammonia route): step 1/1. This chain is Aspartate--ammonia ligase, found in Streptococcus pneumoniae serotype 19F (strain G54).